Consider the following 458-residue polypeptide: Paired box protein Pax-8 (458 aa).

Residues 18-144 (GHGGLNQLGG…SSINRIIRTK (127 aa)) constitute a DNA-binding region (paired). The PAI subdomain stretch occupies residues 21-77 (GLNQLGGAFVNGRPLPEVVRQRIVDLAHQGVRPCDISRQLRVSHGCVSKILGRYYET). An RED subdomain region spans residues 96–144 (KVVEKIGDYKRQNPTMFAWEIRDRLLAEGVCDNDTVPSVSSINRIIRTK). Residues 198–217 (PGADGKRKLDDSDQESCRLS) form a disordered region.

The protein resides in the nucleus. In terms of biological role, probable transcription factor. Involved in kidney development, acting synergistically with lhx1/lim-1 to establish the pronephric primordium in late gastrulae/early neurulae. The polypeptide is Paired box protein Pax-8 (Xenopus tropicalis (Western clawed frog)).